Here is an 850-residue protein sequence, read N- to C-terminus: Ras GTPase-activating protein 2 (850 aa).

Residues 1 to 24 (MAAAAPAAAAASSEAPAASATAEP) show a composition bias toward low complexity. The disordered stretch occupies residues 1–32 (MAAAAPAAAAASSEAPAASATAEPEAGDQDSR). Position 2 is an N-acetylalanine (Ala2). C2 domains are found at residues 20–138 (ATAE…ETWF) and 149–289 (VQGK…QAWY). The Ras-GAP domain occupies 372-589 (DKLVPFATAV…IAVKKFLDEI (218 aa)). Ser555 is subject to Phosphoserine. In terms of domain architecture, PH spans 604-706 (VHLKEGEMYK…WIDVLCRVSR (103 aa)). The Btk-type zinc-finger motif lies at 708–744 (NQNRLSFYHPSVYLNGNWLCCQETGENTLGCKPCTAG). The Zn(2+) site is built by His716, Cys727, Cys728, and Cys738. Residues 825 to 850 (HEKYRKKRSSSAKYGSKENPIVGKAS) form a disordered region.

The protein localises to the cytoplasm. The protein resides in the perinuclear region. Inhibitory regulator of the Ras-cyclic AMP pathway. Binds inositol tetrakisphosphate (IP4). In Homo sapiens (Human), this protein is Ras GTPase-activating protein 2 (RASA2).